A 304-amino-acid polypeptide reads, in one-letter code: Secreted mono- and diacylglycerol lipase MDL3 (304 aa).

An N-terminal signal peptide occupies residues 1–19; that stretch reads MIVGPVISLLLSYFVLVSG. Residues Cys-55 and Cys-297 are joined by a disulfide bond. Asn-161 carries an N-linked (GlcNAc...) asparagine glycan. Ser-171 serves as the catalytic Nucleophile. Active-site residues include Asp-228 and His-281.

The protein belongs to the AB hydrolase superfamily. Lipase family. Class 3 subfamily.

The protein localises to the secreted. Its subcellular location is the cell wall. The enzyme catalyses a monoacylglycerol + H2O = glycerol + a fatty acid + H(+). The catalysed reaction is a diacylglycerol + H2O = a monoacylglycerol + a fatty acid + H(+). In terms of biological role, secreted lipase involved in Dandruff and seborrheic dermatitis (D/SD) probably via lipase-mediated breakdown of sebaceous lipids and release of irritating free fatty acids. Shows activity against monoglyceride and diglyceride substrates, but not triglyceride substrates and does not exhibit regio-selective production of diacylglycerols. Hydrolyzes distearin, dilinolein, dipalmitoylglycerol and dipalmitolein. Cleaves oleic acid from 1,2 isomers of diolein on both the 1 and the 2 position of the glycerol backbone, resulting mainly in free fatty acids but no monoolein is detected. Shows activity on monoolein and liberates mostly free fatty acids, but can also perform the reverse reaction and produce diolein. The sequence is that of Secreted mono- and diacylglycerol lipase MDL3 from Malassezia globosa (strain ATCC MYA-4612 / CBS 7966) (Dandruff-associated fungus).